The chain runs to 294 residues: Protoheme IX farnesyltransferase (294 aa).

The next 9 membrane-spanning stretches (helical) occupy residues 22–42 (VTQL…PELP), 46–66 (IVVA…AINC), 89–109 (ITVP…MWVL), 116–136 (LTMW…TIIL), 143–163 (NIVI…AAVA), 170–190 (AWIL…ALAL), 212–232 (FTQF…MLPF), 234–254 (VGMS…IFVW), and 272–292 (FAYS…DHYL).

Belongs to the UbiA prenyltransferase family. Protoheme IX farnesyltransferase subfamily.

It localises to the cell inner membrane. It carries out the reaction heme b + (2E,6E)-farnesyl diphosphate + H2O = Fe(II)-heme o + diphosphate. Its pathway is porphyrin-containing compound metabolism; heme O biosynthesis; heme O from protoheme: step 1/1. Converts heme B (protoheme IX) to heme O by substitution of the vinyl group on carbon 2 of heme B porphyrin ring with a hydroxyethyl farnesyl side group. The chain is Protoheme IX farnesyltransferase from Janthinobacterium sp. (strain Marseille) (Minibacterium massiliensis).